The following is a 67-amino-acid chain: Non-specific lipid-transfer protein 2 (67 aa).

4 cysteine pairs are disulfide-bonded: C3–C35, C11–C25, C26–C61, and C37–C67.

It belongs to the plant LTP family. Monomer. Post-translationally, disulfide bonds.

In terms of biological role, plant non-specific lipid-transfer proteins transfer phospholipids as well as galactolipids across membranes. May play a role in wax or cutin deposition in the cell walls of expanding epidermal cells and certain secretory tissues. The sequence is that of Non-specific lipid-transfer protein 2 from Apium graveolens var. rapaceum (Celeriac).